A 186-amino-acid chain; its full sequence is Elongation factor P (186 aa).

This sequence belongs to the elongation factor P family.

The protein resides in the cytoplasm. It functions in the pathway protein biosynthesis; polypeptide chain elongation. Its function is as follows. Involved in peptide bond synthesis. Stimulates efficient translation and peptide-bond synthesis on native or reconstituted 70S ribosomes in vitro. Probably functions indirectly by altering the affinity of the ribosome for aminoacyl-tRNA, thus increasing their reactivity as acceptors for peptidyl transferase. The sequence is that of Elongation factor P from Crocosphaera subtropica (strain ATCC 51142 / BH68) (Cyanothece sp. (strain ATCC 51142)).